We begin with the raw amino-acid sequence, 576 residues long: Putative export ATP-binding/permease protein RF_0214 (576 aa).

Residues 20 to 303 (LIIVMISLLS…IFELLSEIHL (284 aa)) form the ABC transmembrane type-1 domain. The next 6 membrane-spanning stretches (helical) occupy residues 21–41 (IIVM…GSVF), 61–81 (ILYI…RSYF), 135–155 (FLSF…LMFF), 158–178 (FKLA…LIKF), 242–262 (ALFF…VVWI), and 277–297 (IISF…IFEL). Residues 336-572 (IEFKNVDFTY…SEIYRNICRE (237 aa)) enclose the ABC transporter domain. 371–378 (GRSGGGKS) serves as a coordination point for ATP.

The protein belongs to the ABC transporter superfamily. As to quaternary structure, homodimer.

It localises to the cell inner membrane. Its function is as follows. Part of an ABC transporter complex. Transmembrane domains (TMD) form a pore in the inner membrane and the ATP-binding domain (NBD) is responsible for energy generation. In Rickettsia felis (strain ATCC VR-1525 / URRWXCal2) (Rickettsia azadi), this protein is Putative export ATP-binding/permease protein RF_0214.